Here is a 275-residue protein sequence, read N- to C-terminus: Maltoporin (275 aa).

The protein belongs to the porin LamB (TC 1.B.3) family. As to quaternary structure, homotrimer formed of three 18-stranded antiparallel beta-barrels, containing three independent channels.

It localises to the cell outer membrane. The catalysed reaction is beta-maltose(in) = beta-maltose(out). Involved in the transport of maltose and maltodextrins. This is Maltoporin (lamB) from Vibrio parahaemolyticus.